The sequence spans 403 residues: MATAGGAAGLAALLGGASPHLLIVSASEEPAGGCRPDADLLLFATPQPSRPGPAPRRPALGRPPVKRKLNLETDHQYIAESLPAARGRARIPGRGAKSPGEKSRYETSLNLTTKRFLELLSQSPDGVVDLNWAAEVLKVQKRRIYDITNVLEGIQLITKKSKNNIQWLGSQVAAGASSRQRLLEKELRDLQAAERQLDDLIQTCTVRLRLLTEDPSNQHAAYVTCQDLRSIVDPSEQMVMVIKAPPETQLQVSDPGEAFQVSVRSTQGPIDVFLCPEDSSGVCSPVKSPFKAPAEELSPGSSQQRASPLLHSAQDVNMLLPEALLPGTALPTKCPTEDVSLSPLASMDTLLEHGKDDFPGFLADEFIALSPPQPQDYHFGLEEGEGISELFDCDFGDFTHLDF.

A cyclin A/CDK2 binding region spans residues 44–85 (ATPQPSRPGPAPRRPALGRPPVKRKLNLETDHQYIAESLPAA). Residues 45–64 (TPQPSRPGPAPRRPALGRPP) are disordered. A DNA-binding region spans residues 87–171 (GRARIPGRGA…KNNIQWLGSQ (85 aa)). The tract at residues 130–151 (LNWAAEVLKVQKRRIYDITNVL) is leucine-zipper. The short motif at 135 to 171 (EVLKVQKRRIYDITNVLEGIQLITKKSKNNIQWLGSQ) is the DEF box element. The segment at 172–261 (VAAGASSRQR…VSDPGEAFQV (90 aa)) is dimerization. Positions 335-403 (PTEDVSLSPL…DFGDFTHLDF (69 aa)) are transactivation. A retinoblastoma protein RB1 binding region spans residues 375-392 (QDYHFGLEEGEGISELFD).

This sequence belongs to the E2F/DP family. Component of the DRTF1/E2F transcription factor complex. Forms heterodimers with DP family members. The E2F1 complex binds specifically hypophosphorylated RB1, the interaction represses E2F1-driven transcription. During the cell cycle, RB1 becomes phosphorylated in mid-to-late G1 phase, detaches from the DRTF1/E2F complex, rendering E2F transcriptionally active. Viral oncoproteins, notably E1A, T-antigen and HPV E7, are capable of sequestering RB1, thus releasing the active complex.

It is found in the nucleus. Its function is as follows. Transcription activator that binds DNA cooperatively with DP proteins through the E2 recognition site, 5'-TTTC[CG]CGC-3' found in the promoter region of a number of genes whose products are involved in cell cycle regulation or in DNA replication. The DRTF1/E2F complex functions in the control of cell-cycle progression from G1 to S phase. E2F1 binds preferentially RB1 in a cell-cycle dependent manner. It can mediate both cell proliferation and TP53/p53-dependent apoptosis. Blocks adipocyte differentiation by binding to specific promoters repressing CEBPA binding to its target gene promoters. Positively regulates transcription of RRP1B. This is Transcription factor E2F1 from Gallus gallus (Chicken).